The primary structure comprises 305 residues: Syntaxin-123 (305 aa).

An N-acetylmethionine modification is found at M1. The Cytoplasmic segment spans residues 1–278 (MNDLISSSFK…KVLQRNNRKW (278 aa)). Positions 46 to 66 (VKEDMKAVDEIHKRLQDANEE) form a coiled coil. The t-SNARE coiled-coil homology domain occupies 206 to 268 (LSEIQERHDT…MRGTDQLHGA (63 aa)). Residues 279–299 (ACIATILAIVVVIVILFPILF) form a helical; Anchor for type IV membrane protein membrane-spanning segment. At 300–305 (NTLLRP) the chain is on the vesicular side.

It belongs to the syntaxin family. Part of the t-SNARE complex. As to expression, expressed in tips of root hairs.

It localises to the membrane. Its function is as follows. Vesicle trafficking protein that functions in the secretory pathway. Acts in coordination with SYP132 to mediate tip-focused membrane trafficking for root hair tip growth. Functions in root hair elongation by forming SNARE complexes with VAMP721,VAMP722 or VAMP724. The sequence is that of Syntaxin-123 from Arabidopsis thaliana (Mouse-ear cress).